Here is a 732-residue protein sequence, read N- to C-terminus: Zinc/cadmium/lead-transporting P-type ATPase (732 aa).

Residues 1-124 (MSTPDNHGKK…QAADEPQASR (124 aa)) lie on the Cytoplasmic side of the membrane. The 65-residue stretch at 48-112 (TRYSWKVSGM…AVQKAGYSLR (65 aa)) folds into the HMA domain. Zn(2+) contacts are provided by aspartate 58, cysteine 59, and cysteine 62. Residues 125 to 145 (LKENLPLITLIVMMAISWGLE) traverse the membrane as a helical segment. Glutamine 146 is a topological domain (periplasmic). Residues 147–167 (FNHPFGQLAFIATTLVGLYPI) traverse the membrane as a helical segment. The Cytoplasmic segment spans residues 168 to 179 (ARQALRLIKSGS). A helical transmembrane segment spans residues 180-197 (YFAIETLMSVAAIGALFI). Topologically, residues 198–202 (GATAE) are periplasmic. A helical membrane pass occupies residues 203-222 (AAMVLLLFLIGERLEGWAAS). Topologically, residues 223-356 (RARQGVSALM…IDRFSRIYTP (134 aa)) are cytoplasmic. Residues 357–377 (AIMAVALLVTLVPPLLFAASW) form a helical membrane-spanning segment. The Periplasmic segment spans residues 378–383 (QEWIYK). Residues 384–404 (GLTLLLIGCPCALVISTPAAI) traverse the membrane as a helical segment. Residues cysteine 392 and cysteine 394 each coordinate Zn(2+). Residues 405 to 685 (TSGLAAAARR…RATHANIRQN (281 aa)) are Cytoplasmic-facing. Aspartate 436 functions as the 4-aspartylphosphate intermediate in the catalytic mechanism. Mg(2+)-binding residues include aspartate 436, threonine 438, and aspartate 628. A helical transmembrane segment spans residues 686–702 (ITIALGLKGIFLVTTLL). Topologically, residues 703-707 (GMTGL) are periplasmic. Residues 708 to 729 (WLAVLADTGATVLVTANALRLL) form a helical membrane-spanning segment. Aspartate 714 contributes to the Zn(2+) binding site. Over 730-732 (RRR) the chain is Cytoplasmic.

The protein belongs to the cation transport ATPase (P-type) (TC 3.A.3) family. Type IB subfamily.

The protein localises to the cell inner membrane. The catalysed reaction is Pb(2+)(in) + ATP + H2O = Pb(2+)(out) + ADP + phosphate + H(+). The enzyme catalyses Zn(2+)(in) + ATP + H2O = Zn(2+)(out) + ADP + phosphate + H(+). It carries out the reaction Cd(2+)(in) + ATP + H2O = Cd(2+)(out) + ADP + phosphate + H(+). Its function is as follows. Confers resistance to zinc, cadmium and lead. Couples the hydrolysis of ATP with the export of zinc, cadmium or lead. This chain is Zinc/cadmium/lead-transporting P-type ATPase, found in Shigella sonnei (strain Ss046).